Here is a 63-residue protein sequence, read N- to C-terminus: Large ribosomal subunit protein uL29 (63 aa).

It belongs to the universal ribosomal protein uL29 family.

This Aggregatibacter actinomycetemcomitans (Actinobacillus actinomycetemcomitans) protein is Large ribosomal subunit protein uL29 (rpmC).